Reading from the N-terminus, the 197-residue chain is Segregation and condensation protein B (197 aa).

It belongs to the ScpB family. Homodimer. Homodimerization may be required to stabilize the binding of ScpA to the Smc head domains. Component of a cohesin-like complex composed of ScpA, ScpB and the Smc homodimer, in which ScpA and ScpB bind to the head domain of Smc. The presence of the three proteins is required for the association of the complex with DNA.

It is found in the cytoplasm. In terms of biological role, participates in chromosomal partition during cell division. May act via the formation of a condensin-like complex containing Smc and ScpA that pull DNA away from mid-cell into both cell halves. This chain is Segregation and condensation protein B, found in Bacillus licheniformis (strain ATCC 14580 / DSM 13 / JCM 2505 / CCUG 7422 / NBRC 12200 / NCIMB 9375 / NCTC 10341 / NRRL NRS-1264 / Gibson 46).